A 170-amino-acid chain; its full sequence is MSLPDKAFPVSWDQFHRDARALAWRIAGLDREWRAIVAITRGGLVPAAIICRELGIRLIETVCIASYHDYTSQGEMQVLKGIGASLLENQGEGVIVVDDLTDTGKTAAIVREMMPRAHFATVYAKPKGRPLIDTLRHGGLTGYLDLFPMGYGLHLSGADCWRKTRLNETK.

5-phospho-alpha-D-ribose 1-diphosphate contacts are provided by residues 41–42 and 98–106; these read RG and DDLTDTGKT. Asp99 lines the Mg(2+) pocket. Asp102 is a binding site for guanine. Residue Asp102 coordinates xanthine. 102 to 106 is a binding site for GMP; sequence DTGKT.

The protein belongs to the purine/pyrimidine phosphoribosyltransferase family. XGPT subfamily. In terms of assembly, homotetramer. Mg(2+) serves as cofactor.

The protein localises to the cell inner membrane. It carries out the reaction GMP + diphosphate = guanine + 5-phospho-alpha-D-ribose 1-diphosphate. The enzyme catalyses XMP + diphosphate = xanthine + 5-phospho-alpha-D-ribose 1-diphosphate. The catalysed reaction is IMP + diphosphate = hypoxanthine + 5-phospho-alpha-D-ribose 1-diphosphate. It participates in purine metabolism; GMP biosynthesis via salvage pathway; GMP from guanine: step 1/1. It functions in the pathway purine metabolism; XMP biosynthesis via salvage pathway; XMP from xanthine: step 1/1. In terms of biological role, purine salvage pathway enzyme that catalyzes the transfer of the ribosyl-5-phosphate group from 5-phospho-alpha-D-ribose 1-diphosphate (PRPP) to the N9 position of the 6-oxopurines guanine and xanthine to form the corresponding ribonucleotides GMP (guanosine 5'-monophosphate) and XMP (xanthosine 5'-monophosphate), with the release of PPi. To a lesser extent, also acts on hypoxanthine. The sequence is that of Xanthine-guanine phosphoribosyltransferase from Brucella abortus (strain 2308).